The chain runs to 260 residues: Type III pantothenate kinase (260 aa).

Asp6–Val13 contacts ATP. Gly107 to Arg110 serves as a coordination point for substrate. Asp109 acts as the Proton acceptor in catalysis. Asp129 serves as a coordination point for K(+). ATP is bound at residue Thr132. A substrate-binding site is contributed by Thr184.

It belongs to the type III pantothenate kinase family. Homodimer. It depends on NH4(+) as a cofactor. Requires K(+) as cofactor.

The protein resides in the cytoplasm. It carries out the reaction (R)-pantothenate + ATP = (R)-4'-phosphopantothenate + ADP + H(+). The protein operates within cofactor biosynthesis; coenzyme A biosynthesis; CoA from (R)-pantothenate: step 1/5. Its function is as follows. Catalyzes the phosphorylation of pantothenate (Pan), the first step in CoA biosynthesis. This is Type III pantothenate kinase from Ruegeria sp. (strain TM1040) (Silicibacter sp.).